A 689-amino-acid chain; its full sequence is Transketolase (689 aa).

Residue H56 participates in substrate binding. Thiamine diphosphate contacts are provided by residues H96 and 144-146 (GNL). D185 is a Mg(2+) binding site. The thiamine diphosphate site is built by G186 and N215. The Mg(2+) site is built by N215 and I217. Substrate-binding residues include H289, R380, and S407. H289 contacts thiamine diphosphate. E434 serves as the catalytic Proton donor. F460 contributes to the thiamine diphosphate binding site. H484, D492, and R543 together coordinate substrate.

This sequence belongs to the transketolase family. Homodimer. The cofactor is Mg(2+). Ca(2+) serves as cofactor. It depends on Mn(2+) as a cofactor. Co(2+) is required as a cofactor. Requires thiamine diphosphate as cofactor.

The catalysed reaction is D-sedoheptulose 7-phosphate + D-glyceraldehyde 3-phosphate = aldehydo-D-ribose 5-phosphate + D-xylulose 5-phosphate. Catalyzes the transfer of a two-carbon ketol group from a ketose donor to an aldose acceptor, via a covalent intermediate with the cofactor thiamine pyrophosphate. This Aquifex aeolicus (strain VF5) protein is Transketolase (tkt).